The primary structure comprises 328 residues: DNA-directed RNA polymerase subunit alpha (328 aa).

The segment at 1–234 is alpha N-terminal domain (alpha-NTD); the sequence is MQNSPTEYLK…GQLSVFADLE (234 aa). The segment at 248–328 is alpha C-terminal domain (alpha-CTD); it reads VDPILLRPVD…NWPPAGLEKV (81 aa).

It belongs to the RNA polymerase alpha chain family. Homodimer. The RNAP catalytic core consists of 2 alpha, 1 beta, 1 beta' and 1 omega subunit. When a sigma factor is associated with the core the holoenzyme is formed, which can initiate transcription.

The enzyme catalyses RNA(n) + a ribonucleoside 5'-triphosphate = RNA(n+1) + diphosphate. In terms of biological role, DNA-dependent RNA polymerase catalyzes the transcription of DNA into RNA using the four ribonucleoside triphosphates as substrates. The sequence is that of DNA-directed RNA polymerase subunit alpha from Methylobacillus flagellatus (strain ATCC 51484 / DSM 6875 / VKM B-1610 / KT).